A 213-amino-acid polypeptide reads, in one-letter code: GTP-binding protein YPTC4 (213 aa).

13-21 (GDTGVGKSC) is a binding site for GTP. Positions 35–43 (HDLTIGVEF) match the Effector region motif. Residues 61-65 (DTAGQ), 119-122 (NKCD), and 149-151 (SAR) each bind GTP. Residues 194-213 (AGPQTVKPGEGGAAKSSSCC) form a disordered region. S-geranylgeranyl cysteine attachment occurs at residues cysteine 212 and cysteine 213.

This sequence belongs to the small GTPase superfamily. Rab family.

It localises to the cell membrane. Functionally, protein transport. Probably involved in vesicular traffic. In Chlamydomonas reinhardtii (Chlamydomonas smithii), this protein is GTP-binding protein YPTC4 (YPTC4).